A 234-amino-acid chain; its full sequence is uncharacterized protein (234 aa).

The ABC transporter domain occupies 5–234 (MELVDVWKIY…ERRGVVYGDT (230 aa)). Residue 41–48 (GPSGSGKS) participates in ATP binding.

The protein belongs to the ABC transporter superfamily.

This is an uncharacterized protein from Thermotoga maritima (strain ATCC 43589 / DSM 3109 / JCM 10099 / NBRC 100826 / MSB8).